The sequence spans 487 residues: Virulence sensor histidine kinase PhoQ (487 aa).

Over 1-16 the chain is Cytoplasmic; the sequence is MNKFARHFLPLSLRVR. Residues 17 to 37 traverse the membrane as a helical segment; sequence FLLATAGVVLVLSLAYGIVAL. Over 38–193 the chain is Periplasmic; the sequence is VGYSVSFDKT…ELKRSYMVWS (156 aa). Positions 151 and 152 each coordinate a divalent metal cation. Residues 194–214 form a helical membrane-spanning segment; it reads WFVYVLAANLLLVIPLLWIAA. Residues 215–266 enclose the HAMP domain; that stretch reads WWSLRPIEALAREVRELEDHHREMLNPETTRELTSLVRNLNQLLKSERERYN. Over 215-487 the chain is Cytoplasmic; it reads WWSLRPIEAL…GRQHPTQKEE (273 aa). The Histidine kinase domain maps to 274–481; that stretch reads DLTHSLKTPL…RMEVVFGRQH (208 aa). Histidine 277 is subject to Phosphohistidine; by autocatalysis. Residue asparagine 386 coordinates Mg(2+). Residues 386-394, 416-421, and 435-447 each bind ATP; these read NVLDNACKY, DDGPGI, and RADTLRPGQGVGL. Glutamine 443 contributes to the Mg(2+) binding site.

Homodimer.

Its subcellular location is the cell inner membrane. It catalyses the reaction ATP + protein L-histidine = ADP + protein N-phospho-L-histidine.. In terms of biological role, member of the two-component regulatory system PhoP/PhoQ which regulates the expression of genes involved in virulence and resistance to host defense antimicrobial peptides. In low periplasmic Mg(2+), PhoQ functions as a membrane-associated protein kinase that undergoes autophosphorylation and subsequently transfers the phosphate to PhoP, which results in the expression of PhoP-activated genes (PAG) and repression of PhoP-repressed genes (PRG). In high periplasmic Mg(2+), acts as a protein phosphatase that dephosphorylates phospho-PhoP, which results in the repression of PAG and may lead to expression of some PRG. In Salmonella paratyphi A (strain ATCC 9150 / SARB42), this protein is Virulence sensor histidine kinase PhoQ (phoQ).